Reading from the N-terminus, the 122-residue chain is UPF0102 protein CE1920 (122 aa).

The protein belongs to the UPF0102 family.

The sequence is that of UPF0102 protein CE1920 from Corynebacterium efficiens (strain DSM 44549 / YS-314 / AJ 12310 / JCM 11189 / NBRC 100395).